The following is a 101-amino-acid chain: Small ribosomal subunit protein uS14 (101 aa).

The interval 1–26 (MAKVSSIQKNKSRQKKSQSLHNKRSE) is disordered. Positions 10–22 (NKSRQKKSQSLHN) are enriched in basic residues.

It belongs to the universal ribosomal protein uS14 family. Part of the 30S ribosomal subunit. Contacts proteins S3 and S10.

Functionally, binds 16S rRNA, required for the assembly of 30S particles and may also be responsible for determining the conformation of the 16S rRNA at the A site. The polypeptide is Small ribosomal subunit protein uS14 (Rickettsia prowazekii (strain Madrid E)).